The primary structure comprises 229 residues: Ribonuclease 3 (229 aa).

The 123-residue stretch at 5 to 127 (LNRLERKLGH…LIGAIYLDAG (123 aa)) folds into the RNase III domain. Glu40 serves as a coordination point for Mg(2+). Asp44 is an active-site residue. Mg(2+) contacts are provided by Asp113 and Glu116. Residue Glu116 is part of the active site. Residues 154–224 (DPKTRLQEFL…AAAALVALGV (71 aa)) enclose the DRBM domain.

Belongs to the ribonuclease III family. As to quaternary structure, homodimer. Mg(2+) serves as cofactor.

Its subcellular location is the cytoplasm. The catalysed reaction is Endonucleolytic cleavage to 5'-phosphomonoester.. Functionally, digests double-stranded RNA. Involved in the processing of primary rRNA transcript to yield the immediate precursors to the large and small rRNAs (23S and 16S). Processes some mRNAs, and tRNAs when they are encoded in the rRNA operon. Processes pre-crRNA and tracrRNA of type II CRISPR loci if present in the organism. The sequence is that of Ribonuclease 3 from Azotobacter vinelandii (strain DJ / ATCC BAA-1303).